Consider the following 464-residue polypeptide: ATP synthase subunit beta (464 aa).

152–159 (GGAGVGKS) contributes to the ATP binding site.

The protein belongs to the ATPase alpha/beta chains family. In terms of assembly, F-type ATPases have 2 components, CF(1) - the catalytic core - and CF(0) - the membrane proton channel. CF(1) has five subunits: alpha(3), beta(3), gamma(1), delta(1), epsilon(1). CF(0) has three main subunits: a(1), b(2) and c(9-12). The alpha and beta chains form an alternating ring which encloses part of the gamma chain. CF(1) is attached to CF(0) by a central stalk formed by the gamma and epsilon chains, while a peripheral stalk is formed by the delta and b chains.

Its subcellular location is the cell membrane. It catalyses the reaction ATP + H2O + 4 H(+)(in) = ADP + phosphate + 5 H(+)(out). Functionally, produces ATP from ADP in the presence of a proton gradient across the membrane. The catalytic sites are hosted primarily by the beta subunits. This Protochlamydia amoebophila (strain UWE25) protein is ATP synthase subunit beta.